Consider the following 904-residue polypeptide: Toll-like receptor 3 (904 aa).

The signal sequence occupies residues 1–26 (MSRPLPYHIHFFSGLLTCWILCTSSA). The LRRNT domain occupies 27 to 52 (HKCTVRHEVADCSHLKLTQIPDDLPT). Topologically, residues 27-705 (HKCTVRHEVA…PCKDSAPFEL (679 aa)) are lumenal. Residues Cys29 and Cys38 are joined by a disulfide bond. N-linked (GlcNAc...) asparagine glycosylation is found at Asn53, Asn58, and Asn71. LRR repeat units follow at residues 53–74 (NITV…NFTR), 77–98 (QLTT…LCQS), 101–122 (WLEI…TFIF), 125–146 (NLTE…PFKN), 149–170 (NLIK…TQLQ), and 173–194 (NLQE…EFDF). A disulfide bridge links Cys96 with Cys123. Asn125 carries an N-linked (GlcNAc...) asparagine glycan. N-linked (GlcNAc...) asparagine glycosylation occurs at Asn197. LRR repeat units lie at residues 199–220 (SLKR…CFHT) and 223–245 (ELSG…LCLE). N-linked (GlcNAc...) asparagine glycans are attached at residues Asn248, Asn253, Asn276, and Asn292. LRR repeat units lie at residues 250–271 (SIEN…TFDG), 276–297 (NLTT…SFAW), 300–321 (HLEY…SFYG), 324–345 (NLRR…TSLP), 357–378 (CLEY…TFTG), 381–401 (RLKF…TNET), 409–430 (PLLL…AFSW), 433–455 (HLEV…EWRG), 466–487 (YNKY…QRLM), 508–529 (NLVI…LLKG), 532–553 (KLEI…ANPG), 564–585 (HLHI…AFKD), 588–609 (ELKS…VFDN), and 612–633 (SLKS…VFGP). Asn399 is a glycosylation site (N-linked (GlcNAc...) asparagine). Asn637, Asn663, and Asn668 each carry an N-linked (GlcNAc...) asparagine glycan. Residues 646–699 (NPFDCTCESIAWFVNWINITHTNISELSNHYLCNTPPQYHGYPVMLFDVSPCKD) enclose the LRRCT domain. Cystine bridges form between Cys650/Cys678 and Cys652/Cys697. The helical transmembrane segment at 706-726 (LFMININILLIFIFIVLLIHF) threads the bilayer. The Cytoplasmic portion of the chain corresponds to 727–904 (EGWRISFYWN…VALGSRNSAH (178 aa)). The TIR domain maps to 754-897 (FEYAAYIIHA…AFHHKLKVAL (144 aa)). Residue Tyr759 is modified to Phosphotyrosine. Glycyl lysine isopeptide (Lys-Gly) (interchain with G-Cter in ubiquitin) cross-links involve residues Lys765, Lys812, and Lys831. At Tyr858 the chain carries Phosphotyrosine.

The protein belongs to the Toll-like receptor family. In terms of assembly, monomer and homodimer; dimerization is triggered by ligand-binding, the signaling unit is composed of one ds-RNA of around 40 bp and two TLR3 molecules, and lateral clustering of signaling units along the length of the ds-RNA ligand is required for TLR3 signal transduction. Interacts (via transmembrane domain) with UNC93B1; the interaction is required for transport from the ER to the endosomes. Interacts with TICAM1 (via the TIR domain) in response to poly(I:C) and this interaction is enhanced in the presence of WDFY1. Interacts with SRC; upon binding of double-stranded RNA. The tyrosine-phosphorylated form (via TIR domain) interacts with WDFY1 (via WD repeat 2) in response to poly(I:C). TLR3 signaling requires a proteolytic cleavage mediated by cathepsins CTSB and CTSH, the cleavage occurs between amino acids 252 and 346. The cleaved form of TLR3 is the predominant form found in endosomes. Post-translationally, ubiquitinated by TRIM3; leading to recognition and sorting of polyubiquitinated TLR3 by the ESCRT complexes. Ubiquitinated by ZNRF1 via 'Lys-63'-linked ubiquitin chains; leading to TLR3 lysosomal trafficking and degradation. Ubiquitinated by RNF170 at Lys-765 via 'Lys-48'-linked ubiquitin chains; leading to TLR3 proteasomal degradation.

The protein localises to the endoplasmic reticulum membrane. The protein resides in the endosome membrane. Its subcellular location is the early endosome. Its function is as follows. Key component of innate and adaptive immunity. TLRs (Toll-like receptors) control host immune response against pathogens through recognition of molecular patterns specific to microorganisms. TLR3 is a nucleotide-sensing TLR which is activated by double-stranded RNA, a sign of viral infection. Acts via the adapter TRIF/TICAM1, leading to NF-kappa-B activation, IRF3 nuclear translocation, cytokine secretion and the inflammatory response. The protein is Toll-like receptor 3 (TLR3) of Bos taurus (Bovine).